The chain runs to 679 residues: Protein white (679 aa).

The interval 1–34 is disordered; it reads MGQEDQEVLIRGGKATSTSAESLNNNNEQPYEQS. A compositionally biased stretch (polar residues) spans 15–34; it reads ATSTSAESLNNNNEQPYEQS. In terms of domain architecture, ABC transporter spans 84–332; it reads NRVKGVFCNE…FSYIGATCPT (249 aa). 121-128 is a binding site for ATP; it reads GSSGAGKT. 5 consecutive transmembrane segments (helical) span residues 427–445, 457–477, 507–525, 534–555, and 568–586; these read LLQT…LGQQ, AIFL…ITVF, LPLF…YPLI, FFTA…GYLI, and VGPP…FLNS. Residues Asn628 and Asn643 are each glycosylated (N-linked (GlcNAc...) asparagine). The chain crosses the membrane as a helical span at residues 651-670; that stretch reads FDFIGLALLIVGFRISAYIA.

The protein belongs to the ABC transporter superfamily. ABCG family. Eye pigment precursor importer (TC 3.A.1.204) subfamily.

The protein localises to the membrane. May be part of a membrane-spanning permease system necessary for the transport of pigment precursors into pigment cells responsible for eye color. The sequence is that of Protein white (W) from Ceratitis capitata (Mediterranean fruit fly).